The sequence spans 436 residues: UPF0229 protein Meso_0256 (436 aa).

The tract at residues 53 to 110 (PMPARGTSEPTFRPDRSSGERGYILPGNKEFAPGDRLPKPGASGGEGGTGAGRGGSDD) is disordered. The segment covering 94–106 (ASGGEGGTGAGRG) has biased composition (gly residues).

It belongs to the UPF0229 family.

The protein is UPF0229 protein Meso_0256 of Chelativorans sp. (strain BNC1).